We begin with the raw amino-acid sequence, 1067 residues long: Kinesin-like protein KIF11-A (1067 aa).

Residues 18–359 form the Kinesin motor domain; that stretch reads NIQVVVRCRP…LDYASRAKNI (342 aa). ATP is bound at residue 105–112; that stretch reads GQTGTGKT. Coiled-coil stretches lie at residues 365–480, 692–721, and 882–915; these read VNQK…QEAF, DSSS…HSEG, and QAQE…QVQS. T937 is modified (phosphothreonine; by CDK1). S1046 bears the Phosphoserine; by NEK6 mark.

It belongs to the TRAFAC class myosin-kinesin ATPase superfamily. Kinesin family. BimC subfamily. Heterotetramer of two heavy and two light chains. Interacts with aurka. In terms of processing, phosphorylation of Thr-937 during mitosis controls the association of this protein with the spindle apparatus. A subset of this protein primarily localized at the spindle pole is phosphorylated by NEK6 during mitosis. Post-translationally, phosphorylated on a serine residue by aurka. As to expression, highly expressed in unfertilized eggs, especially in the germinal vesicle and in the radial yolk-poor channels. Also present in testis.

The protein resides in the cytoplasm. It localises to the cytoskeleton. Its subcellular location is the spindle pole. Functionally, plus end-directed motor protein required for establishing a bipolar spindle. Associates with both interphase and spindle microtubules. May be involved in nuclear divisions taking place during the development of unfertilized eggs. Required in non-mitotic cells for transport of secretory proteins from the Golgi complex to the cell surface. The polypeptide is Kinesin-like protein KIF11-A (kif11-a) (Xenopus laevis (African clawed frog)).